A 208-amino-acid polypeptide reads, in one-letter code: Large ribosomal subunit protein uL4 (208 aa).

The tract at residues 46–84 (QGTHKAKTRAEVRGGGRKPFRQKGTGNARQGSTRSPLMI) is disordered. Polar residues predominate over residues 69 to 80 (GTGNARQGSTRS).

It belongs to the universal ribosomal protein uL4 family. Part of the 50S ribosomal subunit.

One of the primary rRNA binding proteins, this protein initially binds near the 5'-end of the 23S rRNA. It is important during the early stages of 50S assembly. It makes multiple contacts with different domains of the 23S rRNA in the assembled 50S subunit and ribosome. In terms of biological role, forms part of the polypeptide exit tunnel. The polypeptide is Large ribosomal subunit protein uL4 (Chlorobium limicola (strain DSM 245 / NBRC 103803 / 6330)).